The sequence spans 205 residues: uncharacterized protein (205 aa).

This is an uncharacterized protein from Saccharomyces cerevisiae (strain ATCC 204508 / S288c) (Baker's yeast).